The chain runs to 301 residues: Porphobilinogen deaminase (301 aa).

S-(dipyrrolylmethanemethyl)cysteine is present on Cys-242.

Belongs to the HMBS family. Monomer. Requires dipyrromethane as cofactor.

The catalysed reaction is 4 porphobilinogen + H2O = hydroxymethylbilane + 4 NH4(+). Its pathway is porphyrin-containing compound metabolism; protoporphyrin-IX biosynthesis; coproporphyrinogen-III from 5-aminolevulinate: step 2/4. Tetrapolymerization of the monopyrrole PBG into the hydroxymethylbilane pre-uroporphyrinogen in several discrete steps. The polypeptide is Porphobilinogen deaminase (Rickettsia akari (strain Hartford)).